The sequence spans 1009 residues: Serine/threonine-protein phosphatase BSL2 homolog (1009 aa).

The tract at residues 1–48 (MDVDSRMTTESDSDSDAAAQGGGGGGFGSETSSASPSAPGTPTAMGAG) is disordered. Low complexity predominate over residues 29-45 (SETSSASPSAPGTPTAM). Kelch repeat units follow at residues 136-182 (SSAG…VATA), 240-288 (FLLT…TASA), 293-344 (LLLL…FVNA), 349-396 (SGGA…DAAG), and 417-463 (MIYV…IQAG). Positions 549 to 572 (QVNGEAEHSPDREQSPDATPSVKQ) are disordered. Residues 553–563 (EAEHSPDREQS) are compositionally biased toward basic and acidic residues. Residues D711, H713, D745, and N777 each coordinate Mn(2+). The Proton donor role is filled by H778. Positions 830 and 909 each coordinate Mn(2+). The tract at residues 984–1009 (NANRPPTPTRGRPQAANNDRGSLAWI) is disordered.

Belongs to the PPP phosphatase family. BSU subfamily. The cofactor is Mn(2+).

The protein resides in the nucleus. It catalyses the reaction O-phospho-L-seryl-[protein] + H2O = L-seryl-[protein] + phosphate. It carries out the reaction O-phospho-L-threonyl-[protein] + H2O = L-threonyl-[protein] + phosphate. This Oryza sativa subsp. japonica (Rice) protein is Serine/threonine-protein phosphatase BSL2 homolog (BSL2).